Reading from the N-terminus, the 230-residue chain is Pyridoxine/pyridoxamine 5'-phosphate oxidase (230 aa).

Substrate contacts are provided by residues 21 to 24 and lysine 87; that span reads RVEY. FMN contacts are provided by residues 82 to 87, 97 to 98, lysine 104, and glutamine 126; these read RSVLCK and YT. 3 residues coordinate substrate: tyrosine 144, arginine 148, and serine 152. Residues 161–162 and tryptophan 207 contribute to the FMN site; that span reads QS. 213–215 provides a ligand contact to substrate; sequence RVH. Arginine 217 contacts FMN.

Belongs to the pyridoxamine 5'-phosphate oxidase family. Homodimer. FMN is required as a cofactor.

The catalysed reaction is pyridoxamine 5'-phosphate + O2 + H2O = pyridoxal 5'-phosphate + H2O2 + NH4(+). It catalyses the reaction pyridoxine 5'-phosphate + O2 = pyridoxal 5'-phosphate + H2O2. It functions in the pathway cofactor metabolism; pyridoxal 5'-phosphate salvage; pyridoxal 5'-phosphate from pyridoxamine 5'-phosphate: step 1/1. Its pathway is cofactor metabolism; pyridoxal 5'-phosphate salvage; pyridoxal 5'-phosphate from pyridoxine 5'-phosphate: step 1/1. Its function is as follows. Catalyzes the oxidation of either pyridoxine 5'-phosphate (PNP) or pyridoxamine 5'-phosphate (PMP) into pyridoxal 5'-phosphate (PLP). The sequence is that of Pyridoxine/pyridoxamine 5'-phosphate oxidase from Mycolicibacterium smegmatis (strain ATCC 700084 / mc(2)155) (Mycobacterium smegmatis).